Consider the following 604-residue polypeptide: MNKTKGFTKYKKMRYMPGLDGLRAIAVLGIIIYHLNKQWLTGGFLGVDTFFVISGYLITSLLLKEYDDTGIIKLKSFWIRRLKRLLPAVIVLLMVVGTATLLLKSDNIIRVKHDIIAAIFYVSNWWYIAKDVNYFEQFSFMPLKHLWSLAIEEQFYIFFPVILVTLLLTIKKRYKIGFIFWGVSIISLGLMMFIYSINGDHSRVYFGTDTRLQTLLLGVILAFLWPPFKLKNDPPKVVKYVIDSIGSLSFIVLILLFFIINDETNWIYDGGFYLISILTLFIIASVVHPSTWIAKIFSNPVLVFIGKRSYSLYLWHFAVISFVHSYYVDGQIPVYVYFIDISLTIIFAELSYRFIETPFRKEGIKALNWRSSYIPQFIRMVIVVTLLIPFMLILVGAFNKYGKDIIGEKANSFDTTIEDNYSMRIAPIDNIHIDGLVSEKKKESSDVYNNIKPLLIGDSVMVDIGESFKSSVPKSRIDGKVGRQLYQTLPLVKANYSQYKKSSDQVVLELGTNGDFTVKQLDDLLNQFGKAKIYLVNTRVPRIYEANVNRLLADAAKRKSNVTLIDWYKRSQGHSEYFAPDGVHLEYKGVLALKDEILKALKKK.

The next 11 membrane-spanning stretches (helical) occupy residues 15 to 35, 43 to 63, 85 to 105, 150 to 170, 176 to 196, 212 to 232, 240 to 260, 267 to 287, 310 to 330, 332 to 352, and 377 to 397; these read YMPG…IYHL, GFLG…SLLL, LLPA…LLKS, AIEE…LLTI, IGFI…FIYS, LQTL…KLKN, YVID…FFII, IYDG…ASVV, YSLY…YVDG, IPVY…ELSY, and FIRM…LVGA. Catalysis depends on residues Ser459, Asp581, and His584.

It belongs to the acyltransferase 3 family.

Its subcellular location is the cell membrane. This chain is Putative O-acetyltransferase SAR0937, found in Staphylococcus aureus (strain MRSA252).